A 364-amino-acid chain; its full sequence is Dual-specificity RNA methyltransferase RlmN (364 aa).

Glutamate 91 serves as the catalytic Proton acceptor. In terms of domain architecture, Radical SAM core spans 97–333 (ESDRGTLCIS…VTVRKTRGDD (237 aa)). Cysteine 104 and cysteine 338 are disulfide-bonded. Cysteine 111, cysteine 115, and cysteine 118 together coordinate [4Fe-4S] cluster. S-adenosyl-L-methionine-binding positions include 164–165 (GE), serine 196, 218–220 (SLH), and asparagine 295. Cysteine 338 acts as the S-methylcysteine intermediate in catalysis.

It belongs to the radical SAM superfamily. RlmN family. It depends on [4Fe-4S] cluster as a cofactor.

It is found in the cytoplasm. It carries out the reaction adenosine(2503) in 23S rRNA + 2 reduced [2Fe-2S]-[ferredoxin] + 2 S-adenosyl-L-methionine = 2-methyladenosine(2503) in 23S rRNA + 5'-deoxyadenosine + L-methionine + 2 oxidized [2Fe-2S]-[ferredoxin] + S-adenosyl-L-homocysteine. The enzyme catalyses adenosine(37) in tRNA + 2 reduced [2Fe-2S]-[ferredoxin] + 2 S-adenosyl-L-methionine = 2-methyladenosine(37) in tRNA + 5'-deoxyadenosine + L-methionine + 2 oxidized [2Fe-2S]-[ferredoxin] + S-adenosyl-L-homocysteine. Its function is as follows. Specifically methylates position 2 of adenine 2503 in 23S rRNA and position 2 of adenine 37 in tRNAs. m2A2503 modification seems to play a crucial role in the proofreading step occurring at the peptidyl transferase center and thus would serve to optimize ribosomal fidelity. The sequence is that of Dual-specificity RNA methyltransferase RlmN from Neisseria gonorrhoeae (strain ATCC 700825 / FA 1090).